The primary structure comprises 323 residues: Thiamine-monophosphate kinase (323 aa).

Aspartate 30, serine 45, threonine 46, and aspartate 47 together coordinate Mg(2+). Position 54 (histidine 54) interacts with substrate. Mg(2+)-binding residues include aspartate 75 and aspartate 122. Residues 121–122 (GD) and arginine 146 each bind ATP. Aspartate 212 lines the Mg(2+) pocket. Serine 214 contributes to the ATP binding site. Mg(2+) is bound at residue aspartate 215. 2 residues coordinate substrate: glutamate 263 and phenylalanine 319.

This sequence belongs to the thiamine-monophosphate kinase family.

It carries out the reaction thiamine phosphate + ATP = thiamine diphosphate + ADP. It functions in the pathway cofactor biosynthesis; thiamine diphosphate biosynthesis; thiamine diphosphate from thiamine phosphate: step 1/1. Functionally, catalyzes the ATP-dependent phosphorylation of thiamine-monophosphate (TMP) to form thiamine-pyrophosphate (TPP), the active form of vitamin B1. The protein is Thiamine-monophosphate kinase of Buchnera aphidicola subsp. Schizaphis graminum (strain Sg).